A 423-amino-acid chain; its full sequence is COP9 signalosome complex subunit 3 (423 aa).

Residue alanine 2 is modified to N-acetylalanine. A PCI domain is found at 197 to 365; that stretch reads NFERALYFYE…GMVSFHDNPE (169 aa). Positions 402-423 are disordered; sequence QFVQKSMGSQEDDSGNKPSSYS. 3 positions are modified to phosphoserine: serine 407, serine 410, and serine 423.

It belongs to the CSN3 family. Component of the CSN complex, composed of COPS1/GPS1, COPS2, COPS3, COPS4, COPS5, COPS6, COPS7 (COPS7A or COPS7B), COPS8 and COPS9. In the complex, it probably interacts directly with COPS1, COPS4, COPS8 and COPS9. Interacts with CK2 and PKD. Interacts with the translation initiation factor EIF3S6 and IKBKG. Interacts with ERCC6.

The protein resides in the cytoplasm. Its subcellular location is the nucleus. In terms of biological role, component of the COP9 signalosome complex (CSN), a complex involved in various cellular and developmental processes. The CSN complex is an essential regulator of the ubiquitin (Ubl) conjugation pathway by mediating the deneddylation of the cullin subunits of SCF-type E3 ligase complexes, leading to decrease the Ubl ligase activity of SCF-type complexes such as SCF, CSA or DDB2. The complex is also involved in phosphorylation of p53/TP53, c-jun/JUN, IkappaBalpha/NFKBIA, ITPK1 and IRF8/ICSBP, possibly via its association with CK2 and PKD kinases. CSN-dependent phosphorylation of TP53 and JUN promotes and protects degradation by the Ubl system, respectively. Essential to maintain the survival of epiblast cells and thus the development of the postimplantation embryo. This Bos taurus (Bovine) protein is COP9 signalosome complex subunit 3 (COPS3).